The following is an 85-amino-acid chain: UPF0335 protein Oant_1161 (85 aa).

This sequence belongs to the UPF0335 family.

This chain is UPF0335 protein Oant_1161, found in Brucella anthropi (strain ATCC 49188 / DSM 6882 / CCUG 24695 / JCM 21032 / LMG 3331 / NBRC 15819 / NCTC 12168 / Alc 37) (Ochrobactrum anthropi).